Here is a 712-residue protein sequence, read N- to C-terminus: NURS complex subunit red1 (712 aa).

A compositionally biased stretch (basic and acidic residues) spans 1-22 (MSRSINLDELRKKALESKKKNE). Disordered stretches follow at residues 1-71 (MSRS…DRFP), 107-195 (NKTF…TTNQ), and 323-348 (DDFS…GLTM). Positions 5-32 (INLDELRKKALESKKKNEEDESNDSDKE) form a coiled coil. Over residues 23–42 (EDESNDSDKEDGEISEDDPV) the composition is skewed to acidic residues. Positions 130–141 (SETSDSSNTSQS) are enriched in low complexity. Composition is skewed to polar residues over residues 178-193 (FLST…SKTT) and 327-348 (NSKI…GLTM). Residues 351 to 379 (SDYLALLRNKEEEIRRMTKLILRLESNKK) are a coiled coil. The tract at residues 428 to 447 (PSISSSGASSSAATTNSDTT) is disordered. Residues 471–501 (AQIKKSEIDILNNLIEKEEGELTKYQTLVKS) are a coiled coil. Polar residues predominate over residues 545–567 (QADENSSQILSSKTSNAPNGTTE). The interval 545 to 568 (QADENSSQILSSKTSNAPNGTTET) is disordered. A C3H1-type zinc finger spans residues 618-639 (FCKYETTGGVCNDDHCEASHFR).

Interacts with mmi1, pla1 and rrp6.

Its subcellular location is the nucleus. Functionally, promotes the exosome-mediated degradation of mRNAs containing a DSR (determinant of selective removal) signal sequence from mitotic cells. This Schizosaccharomyces pombe (strain 972 / ATCC 24843) (Fission yeast) protein is NURS complex subunit red1.